The primary structure comprises 564 residues: Juvenile hormone esterase (564 aa).

The N-terminal stretch at 1–19 (MTSHVLALAFLLHACTALA) is a signal peptide. Asn81 is a glycosylation site (N-linked (GlcNAc...) asparagine). Residues Cys89 and Cys109 are joined by a disulfide bond. N-linked (GlcNAc...) asparagine glycosylation occurs at Asn180. Ser220 serves as the catalytic Acyl-ester intermediate. Catalysis depends on Glu351, which acts as the Charge relay system. A glycan (N-linked (GlcNAc...) asparagine) is linked at Asn402. The active-site Charge relay system is His465. N-linked (GlcNAc...) asparagine glycosylation occurs at Asn515.

This sequence belongs to the type-B carboxylesterase/lipase family.

The enzyme catalyses juvenile hormone I + H2O = juvenile hormone I carboxylate + methanol + H(+). The catalysed reaction is juvenile hormone III + H2O = juvenile hormone III carboxylate + methanol + H(+). Its function is as follows. JH esterase plays a crucial role in the decrease of JH activity in lepidopteran insects, by hydrolyzing the methyl ester of JH. It is also involved in the transport of JH. This chain is Juvenile hormone esterase, found in Heliothis virescens (Tobacco budworm moth).